We begin with the raw amino-acid sequence, 3371 residues long: Protocadherin-23 (3371 aa).

The segment at 1–40 (MSPCGRKMGEGRQQRRAPVGKLLLLPGRRDTPHGRSGSSG) is disordered. The Cytoplasmic portion of the chain corresponds to 1–46 (MSPCGRKMGEGRQQRRAPVGKLLLLPGRRDTPHGRSGSSGARTQRS). The chain crosses the membrane as a helical span at residues 47-67 (LLWLLVHVWLWAASGSSAQLF). Cadherin domains follow at residues 65 to 167 (QLFN…SPRF), 168 to 296 (PLDS…PPVF), 297 to 413 (EQDE…RPAI), 424 to 539 (ARVS…PPLF), 540 to 663 (SQQH…EPIF), 664 to 771 (WRQV…HPVF), 772 to 881 (NPST…RPKY), 877 to 979 (ERPK…HPAF), 980 to 1082 (LRTS…SPSW), 1085 to 1191 (EHLV…SPTF), 1192 to 1294 (LHDV…RPFF), 1299 to 1415 (PGKE…IPEN), 1404 to 1510 (SQNI…SPSF), 1511 to 1620 (QDEL…NPTF), 1620 to 1724 (FISF…APVF), 1725 to 1829 (KQHL…APEF), 1830 to 1933 (IVSS…SPSF), 1934 to 2038 (PTLY…DPVL), 2039 to 2130 (EQNP…VIHM), 2140 to 2242 (SHHL…SPCF), 2243 to 2347 (EQSI…APAF), 2347 to 2447 (FLPS…PPVF), 2448 to 2549 (SQDF…APEF), 2550 to 2665 (TVKS…PPNF), 2666 to 2769 (SSLS…APQF), 2770 to 2880 (MFSS…EPIF), and 2881 to 2988 (TQDQ…TPLA). Topologically, residues 68–2986 (NLTLSVDEGL…NVSFSSEGTP (2919 aa)) are extracellular. N669, N772, N814, N905, N966, N1038, N1172, and N1275 each carry an N-linked (GlcNAc...) asparagine glycan. N-linked (GlcNAc...) asparagine glycans are attached at residues N1487, N1595, N1617, and N1664. N-linked (GlcNAc...) asparagine glycosylation is present at N1898. N2054, N2070, and N2098 each carry an N-linked (GlcNAc...) asparagine glycan. Residue N2329 is glycosylated (N-linked (GlcNAc...) asparagine). Residues N2479, N2497, N2555, and N2664 are each glycosylated (N-linked (GlcNAc...) asparagine). N-linked (GlcNAc...) asparagine glycosylation is found at N2929 and N2977. A helical transmembrane segment spans residues 2987–3017 (LAVFASSFSISLVVSFLVFLILICILIVMIL). Over 3018–3371 (RHKQKDTINN…ELKAEDEVQI (354 aa)) the chain is Cytoplasmic. Residues 3117–3140 (KCSDSALSDHESRVPDSGIPRDSD) show a composition bias toward basic and acidic residues. A disordered region spans residues 3117 to 3141 (KCSDSALSDHESRVPDSGIPRDSDQ).

In terms of tissue distribution, cerebral cortex and testis.

The protein resides in the membrane. Its function is as follows. Calcium-dependent cell-adhesion protein. This Homo sapiens (Human) protein is Protocadherin-23 (DCHS2).